Consider the following 835-residue polypeptide: Beta-galactosidase (835 aa).

The N-terminal stretch at 1–22 is a signal peptide; it reads MGFWMAMLLMLLLCLWVSCGIA. The active-site Proton donor is E180. Residue E249 is the Nucleophile of the active site. In terms of domain architecture, SUEL-type lectin spans 749–835; the sequence is RPLRPKAHLK…KKLSVEAICS (87 aa).

It belongs to the glycosyl hydrolase 35 family.

The enzyme catalyses Hydrolysis of terminal non-reducing beta-D-galactose residues in beta-D-galactosides.. In terms of biological role, involved in cell wall degradation. Degrades polysaccharides containing beta-(1--&gt;4)-linked galactans, acting as an exo-(1--&gt;4)-beta-D-galactanase. In Solanum lycopersicum (Tomato), this protein is Beta-galactosidase.